The primary structure comprises 430 residues: Sesquiterpene synthase Agr5 (430 aa).

The N-terminal stretch at 1–25 is a signal peptide; that stretch reads MASSLLEPSLAAIALVILLASVSLS. Asparagine 113 carries N-linked (GlcNAc...) asparagine glycosylation. The Mg(2+) site is built by aspartate 176, asparagine 311, serine 315, and glutamate 319. The DDXXD motif signature appears at 176 to 180; the sequence is DEYTD. Arginine 401 and tyrosine 402 together coordinate (2E,6E)-farnesyl diphosphate.

The protein belongs to the terpene synthase family. The cofactor is Mg(2+).

The catalysed reaction is (2E,6E)-farnesyl diphosphate = viridiflorene + diphosphate. Functionally, terpene cyclase that catalyzes the cyclization of farnesyl diphosphate (FPP) to viridiflorene and viridiflorol. This Cyclocybe aegerita (Black poplar mushroom) protein is Sesquiterpene synthase Agr5.